The following is a 269-amino-acid chain: Energy-coupling factor transporter ATP-binding protein EcfA1 (269 aa).

The region spanning 8-242 is the ABC transporter domain; sequence IVFKNVSFQY…AEGLTTIGLD (235 aa). Position 42–49 (42–49) interacts with ATP; that stretch reads GHNGSGKS.

This sequence belongs to the ABC transporter superfamily. Energy-coupling factor EcfA family. Forms a stable energy-coupling factor (ECF) transporter complex composed of 2 membrane-embedded substrate-binding proteins (S component), 2 ATP-binding proteins (A component) and 2 transmembrane proteins (T component).

The protein resides in the cell membrane. Functionally, ATP-binding (A) component of a common energy-coupling factor (ECF) ABC-transporter complex. Unlike classic ABC transporters this ECF transporter provides the energy necessary to transport a number of different substrates. The sequence is that of Energy-coupling factor transporter ATP-binding protein EcfA1 from Staphylococcus aureus (strain bovine RF122 / ET3-1).